The primary structure comprises 224 residues: Propanediol dehydratase medium subunit (224 aa).

The targets protein to the BMC stretch occupies residues 1–18; that stretch reads MEINEKLLRQIIEDVLSE.

The protein belongs to the diol/glycerol dehydratase medium subunit family. The propanediol dehydratase enzyme is a heterotrimeric complex composed of a large (PduC), a medium (PduD) and a small (PduE) subunit. It depends on adenosylcob(III)alamin as a cofactor.

The protein resides in the bacterial microcompartment. The enzyme catalyses propane-1,2-diol = propanal + H2O. The protein operates within polyol metabolism; 1,2-propanediol degradation. Its function is as follows. Part of the PduCDE complex that catalyzes the dehydration of 1,2-propanediol (1,2-PD) to propionaldehyde. This subunit is directly targeted to the bacterial microcompartment (BMC). Functionally, expression of a cosmid containing the full 21-gene pdu operon in E.coli allows E.coli to grow on 1,2-propanediol (1,2-PD) with the appearance of BMCs in its cytoplasm. In terms of biological role, the 1,2-PD-specific bacterial microcompartment (BMC) concentrates low levels of 1,2-PD catabolic enzymes, concentrates volatile reaction intermediates thus enhancing pathway flux and keeps the level of toxic, mutagenic propionaldehyde low. This chain is Propanediol dehydratase medium subunit, found in Citrobacter freundii.